The following is a 74-amino-acid chain: uncharacterized protein (74 aa).

Residues 20–40 traverse the membrane as a helical segment; the sequence is IYSYTLLTLLVITLICYLIHI.

This sequence belongs to the asfivirus KP93L family.

Its subcellular location is the host membrane. This is an uncharacterized protein from African swine fever virus (isolate Tick/South Africa/Pretoriuskop Pr4/1996) (ASFV).